Here is a 55-residue protein sequence, read N- to C-terminus: ATP synthase protein 8 (55 aa).

Residues Leu-11 to Leu-31 traverse the membrane as a helical segment.

Belongs to the ATPase protein 8 family. In terms of assembly, F-type ATPases have 2 components, CF(1) - the catalytic core - and CF(0) - the membrane proton channel.

It is found in the mitochondrion membrane. Functionally, mitochondrial membrane ATP synthase (F(1)F(0) ATP synthase or Complex V) produces ATP from ADP in the presence of a proton gradient across the membrane which is generated by electron transport complexes of the respiratory chain. F-type ATPases consist of two structural domains, F(1) - containing the extramembraneous catalytic core and F(0) - containing the membrane proton channel, linked together by a central stalk and a peripheral stalk. During catalysis, ATP synthesis in the catalytic domain of F(1) is coupled via a rotary mechanism of the central stalk subunits to proton translocation. Part of the complex F(0) domain. Minor subunit located with subunit a in the membrane. This chain is ATP synthase protein 8 (MT-ATP8), found in Albinaria caerulea (Land snail).